The following is a 777-amino-acid chain: Subtilisin-like protease SBT3.3 (777 aa).

Residues 1–24 (MRSFRSSILLVLLSLITVLNATRA) form the signal peptide. Residues 25–111 (RSETESKVHI…VIPDGFHELA (87 aa)) constitute a propeptide, removed in mature form. Residues 32 to 109 (VHIVYLGEKK…VHVIPDGFHE (78 aa)) form the Inhibitor I9 domain. One can recognise a Peptidase S8 domain in the interval 115–624 (TWEYLGLSSA…GGIVNPEKAA (510 aa)). N131 is a glycosylation site (N-linked (GlcNAc...) asparagine). The Charge relay system role is filled by D145. N204 carries N-linked (GlcNAc...) asparagine glycosylation. H220 acts as the Charge relay system in catalysis. N-linked (GlcNAc...) asparagine glycans are attached at residues N235, N397, N412, N508, and N540. The region spanning 403–481 (VCESLNLNPN…ELGTDILSYI (79 aa)) is the PA domain. Catalysis depends on S555, which acts as the Charge relay system. An N-linked (GlcNAc...) asparagine glycan is attached at N647.

The protein belongs to the peptidase S8 family.

The protein resides in the secreted. The protein localises to the extracellular space. Its subcellular location is the extracellular matrix. In terms of biological role, serine protease that plays a role in the control of the establishment of immune priming and systemic induced resistance. The polypeptide is Subtilisin-like protease SBT3.3 (Arabidopsis thaliana (Mouse-ear cress)).